The following is a 353-amino-acid chain: Protein U67 (353 aa).

The protein belongs to the herpesviridae UL95 family.

This chain is Protein U67 (U67), found in Human herpesvirus 6A (strain Uganda-1102) (HHV-6 variant A).